Reading from the N-terminus, the 172-residue chain is 3-hydroxydecanoyl-[acyl-carrier-protein] dehydratase (172 aa).

The active site involves His71.

It belongs to the thioester dehydratase family. FabA subfamily. In terms of assembly, homodimer.

The protein localises to the cytoplasm. It catalyses the reaction a (3R)-hydroxyacyl-[ACP] = a (2E)-enoyl-[ACP] + H2O. It carries out the reaction (3R)-hydroxydecanoyl-[ACP] = (2E)-decenoyl-[ACP] + H2O. The enzyme catalyses (2E)-decenoyl-[ACP] = (3Z)-decenoyl-[ACP]. It functions in the pathway lipid metabolism; fatty acid biosynthesis. Functionally, necessary for the introduction of cis unsaturation into fatty acids. Catalyzes the dehydration of (3R)-3-hydroxydecanoyl-ACP to E-(2)-decenoyl-ACP and then its isomerization to Z-(3)-decenoyl-ACP. Can catalyze the dehydratase reaction for beta-hydroxyacyl-ACPs with saturated chain lengths up to 16:0, being most active on intermediate chain length. The sequence is that of 3-hydroxydecanoyl-[acyl-carrier-protein] dehydratase from Pectobacterium atrosepticum (strain SCRI 1043 / ATCC BAA-672) (Erwinia carotovora subsp. atroseptica).